The following is a 230-amino-acid chain: Ribonuclease 3 (230 aa).

Positions 6–135 constitute an RNase III domain; that stretch reads TTELKERYGI…FLGALYLDQK (130 aa). E48 contributes to the Mg(2+) binding site. D52 is an active-site residue. D121 and E124 together coordinate Mg(2+). Residue E124 is part of the active site. One can recognise a DRBM domain in the interval 161 to 230; it reads DHKTQLQEVL…AERALKSIPQ (70 aa).

This sequence belongs to the ribonuclease III family. Homodimer. It depends on Mg(2+) as a cofactor.

Its subcellular location is the cytoplasm. It carries out the reaction Endonucleolytic cleavage to 5'-phosphomonoester.. Digests double-stranded RNA. Involved in the processing of primary rRNA transcript to yield the immediate precursors to the large and small rRNAs (23S and 16S). Processes some mRNAs, and tRNAs when they are encoded in the rRNA operon. Processes pre-crRNA and tracrRNA of type II CRISPR loci if present in the organism. The chain is Ribonuclease 3 from Enterococcus faecalis (strain ATCC 700802 / V583).